The following is a 489-amino-acid chain: Toxin coregulated pilus biosynthesis outer membrane protein C (489 aa).

Residues 1–16 (MKKTIISTLVIGLVSG) form the signal peptide. Cys-17 is lipidated: N-palmitoyl cysteine. Residue Cys-17 is the site of S-diacylglycerol cysteine attachment. Transmembrane regions (helical) follow at residues 174-190 (FSSS…SSGL), 294-308 (AISL…GASY), 402-417 (QLVS…LPTV), and 442-457 (NYIQ…GGGT).

Its subcellular location is the cell membrane. Involved in TCP pilus biogenesis. This chain is Toxin coregulated pilus biosynthesis outer membrane protein C (tcpC), found in Vibrio cholerae serotype O1 (strain ATCC 39315 / El Tor Inaba N16961).